We begin with the raw amino-acid sequence, 133 residues long: Protransforming growth factor alpha (133 aa).

Residues 1 to 23 (MVPSAGQLALFALGIFLAVCQAL) form the signal peptide. A propeptide spans 24–38 (ENSTSALSDPPVAAA) (removed in mature form). Over 24 to 97 (ENSTSALSDP…AVVAASQKKQ (74 aa)) the chain is Extracellular. The N-linked (GlcNAc...) asparagine glycan is linked to Asn25. The region spanning 42–82 (HFNDCPDSHTQFCFHGTCRFLLQEEKPACVCHSGYVGARCE) is the EGF-like domain. Disulfide bonds link Cys46–Cys59, Cys54–Cys70, and Cys72–Cys81. Residues 89–133 (VVAASQKKQAITALVVVTIVALAVLIITCVLIHCCEVRKHSVVVP) constitute a propeptide, removed in mature form. Residues 98–120 (AITALVVVTIVALAVLIITCVLI) form a helical membrane-spanning segment. At 121-133 (HCCEVRKHSVVVP) the chain is on the cytoplasmic side.

As to quaternary structure, interacts with the PDZ domains of MAGI3, SDCBP and SNTA1. The interaction with SDCBP, is required for the targeting to the cell surface. In the endoplasmic reticulum, in its immature form (i.e. with a prosegment and lacking full N-glycosylation), interacts with CNIH. In the Golgi apparatus, may form a complex with CNIH and GORASP2. Interacts (via cytoplasmic C-terminal domain) with NKD2. Skin.

It localises to the secreted. The protein resides in the extracellular space. The protein localises to the cell membrane. In terms of biological role, TGF alpha is a mitogenic polypeptide that is able to bind to the EGF receptor/EGFR and to act synergistically with TGF beta to promote anchorage-independent cell proliferation in soft agar. In Ovis aries (Sheep), this protein is Protransforming growth factor alpha (TGFA).